We begin with the raw amino-acid sequence, 762 residues long: Semaphorin-4A (762 aa).

The first 32 residues, M1 to A32, serve as a signal peptide directing secretion. The Extracellular segment spans residues G33 to H684. In terms of domain architecture, Sema spans Q37–R495. C114 and C125 are disulfide-bonded. N-linked (GlcNAc...) asparagine glycans are attached at residues N121 and N136. 3 cysteine pairs are disulfide-bonded: C143–C152, C270–C380, and C294–C340. 2 N-linked (GlcNAc...) asparagine glycosylation sites follow: N314 and N497. Positions N497 to P544 constitute a PSI domain. 2 disulfide bridges follow: C498/C515 and C507/C524. The Ig-like C2-type domain occupies N574–F632. Residue N608 is glycosylated (N-linked (GlcNAc...) asparagine). A helical membrane pass occupies residues F685–V705. Over S706–A762 the chain is Cytoplasmic. Positions T722–A762 are disordered.

The protein belongs to the semaphorin family. Interacts with PLXNB1, PLXNB2, PLXNB3, PLXND1 and TIMD2.

It localises to the cell membrane. In terms of biological role, cell surface receptor for PLXNB1, PLXNB2, PLXNB3 and PLXND1 that plays an important role in cell-cell signaling. Regulates glutamatergic and GABAergic synapse development. Promotes the development of inhibitory synapses in a PLXNB1-dependent manner and promotes the development of excitatory synapses in a PLXNB2-dependent manner. Plays a role in priming antigen-specific T-cells, promotes differentiation of Th1 T-helper cells, and thereby contributes to adaptive immunity. Promotes phosphorylation of TIMD2. Inhibits angiogenesis. Promotes axon growth cone collapse. Inhibits axonal extension by providing local signals to specify territories inaccessible for growing axons. This chain is Semaphorin-4A (SEMA4A), found in Bos taurus (Bovine).